Reading from the N-terminus, the 128-residue chain is 3-aminoacrylate deaminase RutC (128 aa).

It belongs to the RutC family.

It carries out the reaction (Z)-3-aminoacrylate + H2O + H(+) = 3-oxopropanoate + NH4(+). Involved in pyrimidine catabolism. Catalyzes the deamination of 3-aminoacrylate to malonic semialdehyde, a reaction that can also occur spontaneously. RutC may facilitate the reaction and modulate the metabolic fitness, rather than catalyzing essential functions. The polypeptide is 3-aminoacrylate deaminase RutC (Enterobacter cloacae subsp. cloacae (strain ATCC 13047 / DSM 30054 / NBRC 13535 / NCTC 10005 / WDCM 00083 / NCDC 279-56)).